We begin with the raw amino-acid sequence, 498 residues long: ATP synthase subunit beta, chloroplastic (498 aa).

Residue 172-179 (GGAGVGKT) participates in ATP binding.

The protein belongs to the ATPase alpha/beta chains family. As to quaternary structure, F-type ATPases have 2 components, CF(1) - the catalytic core - and CF(0) - the membrane proton channel. CF(1) has five subunits: alpha(3), beta(3), gamma(1), delta(1), epsilon(1). CF(0) has four main subunits: a(1), b(1), b'(1) and c(9-12).

Its subcellular location is the plastid. It localises to the chloroplast thylakoid membrane. It carries out the reaction ATP + H2O + 4 H(+)(in) = ADP + phosphate + 5 H(+)(out). In terms of biological role, produces ATP from ADP in the presence of a proton gradient across the membrane. The catalytic sites are hosted primarily by the beta subunits. This Calamus usitatus (Palm tree) protein is ATP synthase subunit beta, chloroplastic.